A 317-amino-acid chain; its full sequence is Taste receptor type 2 member 14 (317 aa).

The Extracellular segment spans residues 1-7; sequence MGGVIKS. The chain crosses the membrane as a helical span at residues 8–28; it reads IFTFVLIVEFIIGNLGNSFIA. Residues 29–55 are Cytoplasmic-facing; sequence LVNCIDWVKGRKISSVDRILTALAISK. Residues 56–76 form a helical membrane-spanning segment; sequence ISLVWLIFGSWCVSVFFPALF. At 77 to 87 the chain is on the extracellular side; it reads ATEKMFRMLTN. Cholesterol contacts are provided by T86 and W89. A helical membrane pass occupies residues 88–108; that stretch reads IWTVINHFSVWLATGLGTFYF. The Cytoplasmic portion of the chain corresponds to 109–129; that stretch reads LKIANFSNSIFLYLKWRVKKV. The chain crosses the membrane as a helical span at residues 130–150; sequence VLVLLLVTSVFLFLNIALINI. At 151 to 184 the chain is on the extracellular side; sequence HINASINGYRRNKTCSSDSSNFTRFSSLIVLTST. N-linked (GlcNAc...) asparagine glycans are attached at residues N153, N162, and N171. Residue V180 participates in cholesterol binding. Residues 185-205 form a helical membrane-spanning segment; that stretch reads VFIFIPFTLSLAMFLLLIFSM. Over 206 to 232 the chain is Cytoplasmic; the sequence is WKHRKKMQHTVKRSGDASTKAHRGVKS. A helical transmembrane segment spans residues 233–253; the sequence is MMTFFLLYAIFSLSFFISVWT. Residues 254 to 261 are Extracellular-facing; sequence SERLEENL. A helical membrane pass occupies residues 262 to 282; that stretch reads IILSQVMGMAYPSCHSCVLIL. Residues S265 and M268 each contribute to the cholesterol site. The Cytoplasmic portion of the chain corresponds to 283 to 317; the sequence is GNKKLRQASLSVLLWLRYMFKDGEPSGHKEFRESS.

Belongs to the G-protein coupled receptor T2R family. Core component of the TAS2R14-GNAI1 complex, consisting of TAS2R14, GNAI1, GNB1 and GNG2; within the complex interacts with GNAI1. Core component of the TAS2R14-GNAT3 complex, consisting of TAS2R14, GNAT3, GNB1 and GNG2; within the complex interacts with GNAT3. Core component of the TAS2R14-GNAS2 complex, consisting of TAS2R14, GNAS2, GNB1 and GNG2; within the complex interacts with GNAS2.

It localises to the membrane. It catalyses the reaction Ca(2+)(in) = Ca(2+)(out). The catalysed reaction is 3',5'-cyclic AMP(in) = 3',5'-cyclic AMP(out). Its activity is regulated as follows. Basal activity is enhanced by binding to bitter tastants, such as flufenamic acid and aristolochic acid. Regulated by cholesterol in a concentration-dependent manner. Its function is as follows. Gustducin-linked G-protein coupled receptor that plays a role in the perception of bitterness. The activity of this receptor stimulates GNAT3, activating the gustducin G-protein pathway. Likely plays a role in sensing the chemical composition of the gastrointestinal content and other extra-oral tissues via the inhibitory G-protein pathways. The sequence is that of Taste receptor type 2 member 14 (TAS2R14) from Pan paniscus (Pygmy chimpanzee).